The sequence spans 1028 residues: Golgin subfamily A member 2 (1028 aa).

Residues 1-112 (MADQNRQIKL…NRPLSSTESL (112 aa)) are disordered. Residues 40-60 (KGDQTDAPADRRSPENERVDV) show a composition bias toward basic and acidic residues. Residues 74 to 87 (NPASAINTDNSAPQ) show a composition bias toward polar residues. 5 coiled-coil regions span residues 162-200 (NTQL…EQGA), 233-388 (ARQK…YAVQ), 414-690 (RDST…LLNG), 738-769 (LSRV…LTAL), and 799-840 (HEAL…LSGE). Residues 259 to 280 (RTLSSVSTQQKQHERHNKELEK) are disordered. Residues 756 to 791 (RRIHQDTRQQLTALSHDHHHHHHHEPHSTCAETDGS) form a disordered region. The segment at 944–981 (AMDVSSSPQSSTAEIQSQSSERPAADPISSPSLRPQED) is disordered. Residues 945–964 (MDVSSSPQSSTAEIQSQSSE) show a composition bias toward polar residues.

The protein belongs to the GOLGA2 family.

The protein localises to the golgi apparatus. It is found in the cis-Golgi network membrane. The protein resides in the endoplasmic reticulum-Golgi intermediate compartment membrane. It localises to the cytoplasm. Its subcellular location is the cytoskeleton. The protein localises to the spindle pole. In terms of biological role, peripheral membrane component of the cis-Golgi stack that acts as a membrane skeleton that maintains the structure of the Golgi apparatus, and as a vesicle thether that facilitates vesicle fusion to the Golgi membrane. Required for normal protein transport from the endoplasmic reticulum to the Golgi apparatus and the cell membrane. Plays a central role in mitotic Golgi disassembly. Also plays a key role in spindle pole assembly and centrosome organization. It probably promotes mitotic spindle pole assembly by activating assembly factors to nucleate microtubules around the Golgi and capture them to couple mitotic membranes to the spindle. Also required for the Golgi ribbon formation and glycosylation of membrane and secretory proteins. This Danio rerio (Zebrafish) protein is Golgin subfamily A member 2.